We begin with the raw amino-acid sequence, 253 residues long: Probable transcriptional regulatory protein RC0681 (253 aa).

A disordered region spans residues Met1 to Arg21.

The protein belongs to the TACO1 family.

It localises to the cytoplasm. The polypeptide is Probable transcriptional regulatory protein RC0681 (Rickettsia conorii (strain ATCC VR-613 / Malish 7)).